Reading from the N-terminus, the 176-residue chain is Negative modulator of initiation of replication (176 aa).

This sequence belongs to the SeqA family. As to quaternary structure, homodimer. Polymerizes to form helical filaments.

Its subcellular location is the cytoplasm. Its function is as follows. Negative regulator of replication initiation, which contributes to regulation of DNA replication and ensures that replication initiation occurs exactly once per chromosome per cell cycle. Binds to pairs of hemimethylated GATC sequences in the oriC region, thus preventing assembly of replication proteins and re-initiation at newly replicated origins. Repression is relieved when the region becomes fully methylated. In Hamiltonella defensa subsp. Acyrthosiphon pisum (strain 5AT), this protein is Negative modulator of initiation of replication.